A 484-amino-acid polypeptide reads, in one-letter code: tRNA sulfurtransferase (484 aa).

The region spanning 63–167 is the THUMP domain; it reads EAFAERLACI…KESLYLVSKR (105 aa). Residues 185–186, Lys267, Gly289, and Gln298 each bind ATP; that span reads LI. Cys346 and Cys458 are disulfide-bonded. The Rhodanese domain maps to 406 to 484; sequence INSGEVIIDV…GYDNVKVYRP (79 aa). Residue Cys458 is the Cysteine persulfide intermediate of the active site.

The protein belongs to the ThiI family.

Its subcellular location is the cytoplasm. It carries out the reaction [ThiI sulfur-carrier protein]-S-sulfanyl-L-cysteine + a uridine in tRNA + 2 reduced [2Fe-2S]-[ferredoxin] + ATP + H(+) = [ThiI sulfur-carrier protein]-L-cysteine + a 4-thiouridine in tRNA + 2 oxidized [2Fe-2S]-[ferredoxin] + AMP + diphosphate. The enzyme catalyses [ThiS sulfur-carrier protein]-C-terminal Gly-Gly-AMP + S-sulfanyl-L-cysteinyl-[cysteine desulfurase] + AH2 = [ThiS sulfur-carrier protein]-C-terminal-Gly-aminoethanethioate + L-cysteinyl-[cysteine desulfurase] + A + AMP + 2 H(+). It participates in cofactor biosynthesis; thiamine diphosphate biosynthesis. Its function is as follows. Catalyzes the ATP-dependent transfer of a sulfur to tRNA to produce 4-thiouridine in position 8 of tRNAs, which functions as a near-UV photosensor. Also catalyzes the transfer of sulfur to the sulfur carrier protein ThiS, forming ThiS-thiocarboxylate. This is a step in the synthesis of thiazole, in the thiamine biosynthesis pathway. The sulfur is donated as persulfide by IscS. This is tRNA sulfurtransferase from Shewanella woodyi (strain ATCC 51908 / MS32).